A 246-amino-acid polypeptide reads, in one-letter code: tRNA (guanine-N(1)-)-methyltransferase (246 aa).

S-adenosyl-L-methionine-binding positions include Gly-113 and 133–138 (IGDFVM).

Belongs to the RNA methyltransferase TrmD family. Homodimer.

It localises to the cytoplasm. The enzyme catalyses guanosine(37) in tRNA + S-adenosyl-L-methionine = N(1)-methylguanosine(37) in tRNA + S-adenosyl-L-homocysteine + H(+). Functionally, specifically methylates guanosine-37 in various tRNAs. This chain is tRNA (guanine-N(1)-)-methyltransferase, found in Vibrio atlanticus (strain LGP32) (Vibrio splendidus (strain Mel32)).